We begin with the raw amino-acid sequence, 366 residues long: MKAAADRLMAARAREGRTRVLIVDDSAMVRQALALGLSTDPRLEVVGTASGAEAARAQMAALKPDVVTLDLEMPQMDGLTFLRSYMESAPVPTVVISSLTRTSGETAMRAMEAGAVDIISKPSLGAGQGLPAIMRDVCARVWAAARARLALPDGAAPAPVAPGASEDWIHALGASTGGVQALSRILPFFPAQSPGLLVVQHMPEGFTAAFARRLDALCRMRVREAADGDLVLPGLVLIAPGGLRHMEIERAGGVCRVRLVAGAPVSYSRPSVDRMFLSLAAAAGPRVSAALLTGMGRDGAAGLLAIRRAGGRTFAQDEGSSAVFGMPLAARDLRAAEEILTLDDIPARMMLAAAADTRAPSLASND.

Positions arginine 19–aspartate 136 constitute a Response regulatory domain. The residue at position 70 (aspartate 70) is a 4-aspartylphosphate. The region spanning proline 162–aspartate 356 is the CheB-type methylesterase domain. Active-site residues include serine 175, histidine 201, and aspartate 298.

The protein belongs to the CheB family. In terms of processing, phosphorylated by CheA. Phosphorylation of the N-terminal regulatory domain activates the methylesterase activity.

The protein resides in the cytoplasm. It catalyses the reaction [protein]-L-glutamate 5-O-methyl ester + H2O = L-glutamyl-[protein] + methanol + H(+). The enzyme catalyses L-glutaminyl-[protein] + H2O = L-glutamyl-[protein] + NH4(+). Its function is as follows. Involved in chemotaxis. Part of a chemotaxis signal transduction system that modulates chemotaxis in response to various stimuli. Catalyzes the demethylation of specific methylglutamate residues introduced into the chemoreceptors (methyl-accepting chemotaxis proteins or MCP) by CheR. Also mediates the irreversible deamidation of specific glutamine residues to glutamic acid. The protein is Protein-glutamate methylesterase/protein-glutamine glutaminase of group 2 operon of Cereibacter sphaeroides (Rhodobacter sphaeroides).